The following is a 276-amino-acid chain: Large ribosomal subunit protein uL2c (276 aa).

The segment at 225–276 (AMNPVDHPHGGGEGRTPIGRKKPVTPWGYSALGKKSRKRNRYSDASILRRRE) is disordered.

This sequence belongs to the universal ribosomal protein uL2 family. Part of the 50S ribosomal subunit.

It localises to the plastid. It is found in the chloroplast. The chain is Large ribosomal subunit protein uL2c (rpl2) from Pinus thunbergii (Japanese black pine).